Consider the following 300-residue polypeptide: Transcription initiation factor IIB (300 aa).

The segment at 2-34 (TKQKVCPVCGSTEFIYDPERGEIVCARCGYVIE) adopts a TFIIB-type zinc-finger fold. C7, C10, C26, and C29 together coordinate Zn(2+). 2 repeat units span residues 114–197 (SELD…ARNL) and 210–291 (DYVN…ELVE).

It belongs to the TFIIB family.

In terms of biological role, stabilizes TBP binding to an archaeal box-A promoter. Also responsible for recruiting RNA polymerase II to the pre-initiation complex (DNA-TBP-TFIIB). This Pyrococcus horikoshii (strain ATCC 700860 / DSM 12428 / JCM 9974 / NBRC 100139 / OT-3) protein is Transcription initiation factor IIB.